The primary structure comprises 744 residues: Tripartite motif-containing protein 2 (744 aa).

Ser10 is subject to Phosphoserine. An RING-type zinc finger spans residues 23-64; sequence CSICLERYKNPKVLPCLHTFCERCLQNYIPAHSLTLSCPVCR. The B box-type zinc finger occupies 113 to 154; sequence GKPLSCPNHDGNVMEFYCQSCETAMCRECTEGEHAEHPTVPL. Cys118, His121, Cys141, and His146 together coordinate Zn(2+). The Filamin repeat unit spans residues 320 to 421; that stretch reads TTNAVASETV…IRGSPFKLKV (102 aa). Phosphothreonine is present on Thr371. Phosphoserine occurs at positions 375, 424, and 428. A disordered region spans residues 432–462; the sequence is EGVKRRVKSPGSGHVKQKAVKRPASMYSTGK. NHL repeat units follow at residues 473 to 516, 520 to 563, 564 to 605, 609 to 652, 656 to 699, and 700 to 743; these read IFRV…FSND, KSRF…FSND, GKFK…FQPN, VTRF…FNQE, MLKF…FDGS, and GSFL…YRYL.

This sequence belongs to the TRIM/RBCC family. As to quaternary structure, forms homooligomers. Interacts with TRIM3; this interaction reduces TRIM2 activity. Interacts with myosin V; myosin V may not be a substrate for ubiquitination. Interacts with NEFL. Interacts with phosphorylated BCL2L11. Interacts with SIRPA. In terms of processing, RING-type zinc finger-dependent and UBE2D1-dependent autoubiquitination.

The enzyme catalyses S-ubiquitinyl-[E2 ubiquitin-conjugating enzyme]-L-cysteine + [acceptor protein]-L-lysine = [E2 ubiquitin-conjugating enzyme]-L-cysteine + N(6)-ubiquitinyl-[acceptor protein]-L-lysine.. It participates in protein modification; protein ubiquitination. Functionally, UBE2D1-dependent E3 ubiquitin-protein ligase that mediates the ubiquitination of NEFL and of phosphorylated BCL2L11. Plays a neuroprotective function. May play a role in neuronal rapid ischemic tolerance. Plays a role in antiviral immunity and limits New World arenavirus infection independently of its ubiquitin ligase activity. The polypeptide is Tripartite motif-containing protein 2 (Trim2) (Rattus norvegicus (Rat)).